The chain runs to 29 residues: Orphan peptide CllNtx (29 aa).

Post-translationally, contains 3 disulfide bonds. As to expression, expressed by the venom gland.

The protein localises to the secreted. In terms of biological role, may act as a toxin. This Centruroides limpidus (Mexican scorpion) protein is Orphan peptide CllNtx.